We begin with the raw amino-acid sequence, 277 residues long: Bifunctional protein FolD (277 aa).

NADP(+) contacts are provided by residues glycine 156–serine 158, serine 183, and isoleucine 224.

The protein belongs to the tetrahydrofolate dehydrogenase/cyclohydrolase family. Homodimer.

The catalysed reaction is (6R)-5,10-methylene-5,6,7,8-tetrahydrofolate + NADP(+) = (6R)-5,10-methenyltetrahydrofolate + NADPH. The enzyme catalyses (6R)-5,10-methenyltetrahydrofolate + H2O = (6R)-10-formyltetrahydrofolate + H(+). Its pathway is one-carbon metabolism; tetrahydrofolate interconversion. Functionally, catalyzes the oxidation of 5,10-methylenetetrahydrofolate to 5,10-methenyltetrahydrofolate and then the hydrolysis of 5,10-methenyltetrahydrofolate to 10-formyltetrahydrofolate. This is Bifunctional protein FolD from Kosmotoga olearia (strain ATCC BAA-1733 / DSM 21960 / TBF 19.5.1).